We begin with the raw amino-acid sequence, 376 residues long: Lactosylceramide 1,3-N-acetyl-beta-D-glucosaminyltransferase (376 aa).

Over 1–13 (MRLFVSRRVKRWK) the chain is Cytoplasmic. A helical; Signal-anchor for type II membrane protein membrane pass occupies residues 14–34 (IFHFFVTCFILSFMVFWSPIN). Over 35–376 (NYIMSHMKSY…NSYPCWAAFA (342 aa)) the chain is Lumenal. Asn57 carries N-linked (GlcNAc...) asparagine glycosylation.

This sequence belongs to the glycosyltransferase 31 family. Highly expressed in adult spleen, placenta and cerebellar Purkinje cells where it colocalizes with HNK-1. Expressed at lower level in brain, lung, thymus and muscle.

The protein resides in the golgi apparatus membrane. The catalysed reaction is a beta-D-Gal-(1-&gt;4)-beta-D-Glc-(1&lt;-&gt;1)-Cer(d18:1(4E)) + UDP-N-acetyl-alpha-D-glucosamine = a beta-D-GlcNAc-(1-&gt;3)-beta-D-Gal-(1-&gt;4)-beta-D-Glc-(1&lt;-&gt;1)-Cer(d18:1(4E)) + UDP + H(+). It carries out the reaction a neolactoside nLc4Cer(d18:1(4E)) + UDP-N-acetyl-alpha-D-glucosamine = a neolactoside IV(3)-beta-GlcNAc-nLc4Cer(d18:1(4E)) + UDP + H(+). Its pathway is protein modification; protein glycosylation. In terms of biological role, beta-1,3-N-acetylglucosaminyltransferase that plays a key role in the synthesis of lacto- or neolacto-series carbohydrate chains on glycolipids, notably by participating in biosynthesis of HNK-1 and Lewis X carbohydrate structures. Has strong activity toward lactosylceramide (LacCer) and neolactotetraosylceramide (nLc(4)Cer; paragloboside), resulting in the synthesis of Lc(3)Cer and neolactopentaosylceramide (nLc(5)Cer), respectively. Plays a central role in regulating neolacto-series glycolipid synthesis during embryonic development. This Mus musculus (Mouse) protein is Lactosylceramide 1,3-N-acetyl-beta-D-glucosaminyltransferase.